The sequence spans 919 residues: Isoleucine--tRNA ligase (919 aa).

Positions 59-69 match the 'HIGH' region motif; that stretch reads PYANGHLHIGH. L-isoleucyl-5'-AMP is bound at residue Glu570. A 'KMSKS' region motif is present at residues 611-615; the sequence is KMSKS. Lys614 provides a ligand contact to ATP. 4 residues coordinate Zn(2+): Cys893, Cys896, Cys908, and Cys911.

Belongs to the class-I aminoacyl-tRNA synthetase family. IleS type 1 subfamily. In terms of assembly, monomer. Zn(2+) is required as a cofactor.

It localises to the cytoplasm. It catalyses the reaction tRNA(Ile) + L-isoleucine + ATP = L-isoleucyl-tRNA(Ile) + AMP + diphosphate. Its function is as follows. Catalyzes the attachment of isoleucine to tRNA(Ile). As IleRS can inadvertently accommodate and process structurally similar amino acids such as valine, to avoid such errors it has two additional distinct tRNA(Ile)-dependent editing activities. One activity is designated as 'pretransfer' editing and involves the hydrolysis of activated Val-AMP. The other activity is designated 'posttransfer' editing and involves deacylation of mischarged Val-tRNA(Ile). The polypeptide is Isoleucine--tRNA ligase (Campylobacter curvus (strain 525.92)).